Consider the following 148-residue polypeptide: Calcium-permeable cation-selective channel WeiTsing (148 aa).

Residues 1–25 are Cytoplasmic-facing; sequence METVSAVNQTLPISGGEPVKFTTYS. Residues 26 to 46 form a helical membrane-spanning segment; sequence AAVHKVLVMINAGILGLLQLV. The Lumenal segment spans residues 47 to 51; the sequence is SQQSS. A helical transmembrane segment spans residues 52 to 72; sequence VLETHKAAFLCFCVFILFYAV. The Cytoplasmic portion of the chain corresponds to 73–90; it reads LRVREAMDVRLQPGLVPR. Residues 91 to 110 traverse the membrane as a helical segment; that stretch reads LIGHGSHLFGGLAALVLVSV. Topologically, residues 111–116 are lumenal; the sequence is VSTAFS. The helical transmembrane segment at 117–133 threads the bilayer; the sequence is IVLFLLWFIWLSAVVYL. At 134-148 the chain is on the cytoplasmic side; sequence ETNKPSACPPQLPPV.

As to quaternary structure, forms pentamers with a central pore to produce an ion channel.

The protein resides in the endoplasmic reticulum membrane. It catalyses the reaction Ca(2+)(in) = Ca(2+)(out). The catalysed reaction is Na(+)(in) = Na(+)(out). In terms of biological role, calcium-permeable cation-selective channel conferring a broad-spectrum clubroot resistance by supporting cytosolic Ca(2+) increase in root pericycle cells. Triggers immunity toward fungal pathogens such as Plasmodiophora brassicae (Pb) and induces defenses. Also permeable to sodium ion Na(+) and possibly other cations. The polypeptide is Calcium-permeable cation-selective channel WeiTsing (Arabidopsis thaliana (Mouse-ear cress)).